Reading from the N-terminus, the 448-residue chain is N-succinylarginine dihydrolase (448 aa).

Substrate is bound by residues 19 to 28 (GGLSYGNVAS), N110, and 137 to 138 (HR). E174 is an active-site residue. Position 214 (R214) interacts with substrate. H250 is a catalytic residue. Substrate is bound by residues D252 and N365. The active-site Nucleophile is C371.

This sequence belongs to the succinylarginine dihydrolase family. As to quaternary structure, homodimer.

The catalysed reaction is N(2)-succinyl-L-arginine + 2 H2O + 2 H(+) = N(2)-succinyl-L-ornithine + 2 NH4(+) + CO2. It participates in amino-acid degradation; L-arginine degradation via AST pathway; L-glutamate and succinate from L-arginine: step 2/5. In terms of biological role, catalyzes the hydrolysis of N(2)-succinylarginine into N(2)-succinylornithine, ammonia and CO(2). The polypeptide is N-succinylarginine dihydrolase (Ectopseudomonas mendocina (strain ymp) (Pseudomonas mendocina)).